The primary structure comprises 102 residues: MTQSARVKLTSINLLKLDGVCGIIMDIGKRTGVRIKGPTPLPVKKLHIATRKSPCGSGTETYEKWEMRMHRRIIDISADDKTIRRLIDLKIPDDVHLELFLT.

Belongs to the universal ribosomal protein uS10 family. Part of the 30S ribosomal subunit.

In terms of biological role, involved in the binding of tRNA to the ribosomes. In Cenarchaeum symbiosum (strain A), this protein is Small ribosomal subunit protein uS10.